Consider the following 244-residue polypeptide: MYRPFLEHLQQKLQSSFDLQSLTIPAGLDYRISERGRESTTIRSWCYTCSELRKIRYTYIDGGEHAQVFNSVIYPAHRYDLPLLGIDLLAFGKKKNLIVLDFQPLFRDKAYLARYIEPMRILRERYGDVAQDVEMKFYDANQYFSKYLLFARTDAETVAGRVFTAYCDYLDLYWQLLASAAPLGDAQDIRRIVKAQKDYDQYSADRDPASGLFSSYFGHEWAERFLYEFLFEDAVPLAVGQPGR.

The protein belongs to the HY2 family.

The catalysed reaction is 15,16-dihydrobiliverdin + oxidized 2[4Fe-4S]-[ferredoxin] = biliverdin IXalpha + reduced 2[4Fe-4S]-[ferredoxin] + 2 H(+). Functionally, catalyzes the two-electron reduction of biliverdin IX-alpha at the C15 methine bridge. This chain is 15,16-dihydrobiliverdin:ferredoxin oxidoreductase (pebA), found in Gloeobacter violaceus (strain ATCC 29082 / PCC 7421).